The primary structure comprises 394 residues: Guanine nucleotide-binding protein G(s) subunit alpha isoforms short (394 aa).

The segment at 1–23 (MGCLGNSKTEDQRNEEKAQREAN) is disordered. A lipid anchor (N-palmitoyl glycine) is attached at glycine 2. Cysteine 3 is lipidated: S-palmitoyl cysteine. A compositionally biased stretch (basic and acidic residues) spans 8–23 (KTEDQRNEEKAQREAN). Residues 39–394 (ATHRLLLLGA…RMHLRQYELL (356 aa)) enclose the G-alpha domain. The segment at 42 to 55 (RLLLLGAGESGKST) is G1 motif. 47–55 (GAGESGKST) contributes to the GTP binding site. A Mg(2+)-binding site is contributed by serine 54. The interval 68-91 (FNGEGGEEDPQAARSNSDGEKATK) is disordered. A G2 motif region spans residues 196–204 (DLLRCRVLT). GTP contacts are provided by residues 197-204 (LLRCRVLT), 223-227 (DVGGQ), and 292-295 (NKQD). Residue threonine 204 coordinates Mg(2+). The G3 motif stretch occupies residues 219 to 228 (FHMFDVGGQR). The segment at 288–295 (ILFLNKQD) is G4 motif. Residue lysine 300 forms a Glycyl lysine isopeptide (Lys-Gly) (interchain with G-Cter in ubiquitin) linkage. Residue serine 352 is modified to Phosphoserine. The G5 motif stretch occupies residues 364-369 (TCAVDT). Alanine 366 contacts GTP.

It belongs to the G-alpha family. G(s) subfamily. In terms of assembly, heterotrimeric G proteins are composed of 3 units; alpha, beta and gamma. The alpha chain contains the guanine nucleotide binding site. Component of the TAS2R14-GNAS2 complex, consisting of TAS2R14, GNAS2, GNB1 and GNG2; within the complex interacts with TAS2R14; this complex plays a role in the perception of bitterness. Interacts with CRY1; the interaction may block GPCR-mediated regulation of cAMP concentrations. Interacts with ADCY6 and stimulates its adenylyl cyclase activity. Interacts with ADCY2 and ADCY5. Stimulates the ADCY5 adenylyl cyclase activity. Interacts (GDP-bound form) with RIC8B; promoting GNAS folding and association with the plasma membrane. Interaction with SASH1. Interacts with GASL2L2.

Its subcellular location is the cell membrane. It carries out the reaction GTP + H2O = GDP + phosphate + H(+). Its function is as follows. Guanine nucleotide-binding proteins (G proteins) function as transducers in numerous signaling pathways controlled by G protein-coupled receptors (GPCRs). The alpha chain contains the guanine nucleotide binding site and alternates between an active, GTP-bound state and an inactive, GDP-bound state. Signaling by an activated GPCR promotes GDP release and GTP binding. The alpha subunit has a low GTPase activity that converts bound GTP to GDP, thereby terminating the signal. Both GDP release and GTP hydrolysis are modulated by numerous regulatory proteins. Signaling involves the activation of adenylyl cyclases, resulting in increased levels of the signaling molecule cAMP. Functions downstream of beta-adrenergic receptors. Stimulates the Ras signaling pathway via RAPGEF2. The polypeptide is Guanine nucleotide-binding protein G(s) subunit alpha isoforms short (GNAS) (Bos taurus (Bovine)).